The chain runs to 344 residues: Photosystem II protein D1 (344 aa).

A run of 3 helical transmembrane segments spans residues 29 to 46 (YIGW…TATT), 118 to 133 (HFFI…EWEL), and 142 to 156 (WIAV…AATA). H118 contacts chlorophyll a. Y126 serves as a coordination point for pheophytin a. [CaMn4O5] cluster is bound by residues D170 and E189. A helical transmembrane segment spans residues 197 to 218 (FHMLGVAGVFGGSLFSAMHGSL). H198 is a binding site for chlorophyll a. A quinone contacts are provided by residues H215 and 264–265 (SF). H215 is a binding site for Fe cation. Residue H272 participates in Fe cation binding. Residues 274 to 288 (FLAAWPVIGIWFTAM) traverse the membrane as a helical segment. H332, E333, D342, and A344 together coordinate [CaMn4O5] cluster.

This sequence belongs to the reaction center PufL/M/PsbA/D family. As to quaternary structure, PSII is composed of 1 copy each of membrane proteins PsbA, PsbB, PsbC, PsbD, PsbE, PsbF, PsbH, PsbI, PsbJ, PsbK, PsbL, PsbM, PsbT, PsbY, PsbZ, Psb30/Ycf12, at least 3 peripheral proteins of the oxygen-evolving complex and a large number of cofactors. It forms dimeric complexes. It depends on The D1/D2 heterodimer binds P680, chlorophylls that are the primary electron donor of PSII, and subsequent electron acceptors. It shares a non-heme iron and each subunit binds pheophytin, quinone, additional chlorophylls, carotenoids and lipids. D1 provides most of the ligands for the Mn4-Ca-O5 cluster of the oxygen-evolving complex (OEC). There is also a Cl(-1) ion associated with D1 and D2, which is required for oxygen evolution. The PSII complex binds additional chlorophylls, carotenoids and specific lipids. as a cofactor. Tyr-161 forms a radical intermediate that is referred to as redox-active TyrZ, YZ or Y-Z.

Its subcellular location is the plastid. It localises to the chloroplast thylakoid membrane. The catalysed reaction is 2 a plastoquinone + 4 hnu + 2 H2O = 2 a plastoquinol + O2. Functionally, photosystem II (PSII) is a light-driven water:plastoquinone oxidoreductase that uses light energy to abstract electrons from H(2)O, generating O(2) and a proton gradient subsequently used for ATP formation. It consists of a core antenna complex that captures photons, and an electron transfer chain that converts photonic excitation into a charge separation. The D1/D2 (PsbA/PsbD) reaction center heterodimer binds P680, the primary electron donor of PSII as well as several subsequent electron acceptors. This Bigelowiella natans (Pedinomonas minutissima) protein is Photosystem II protein D1.